A 261-amino-acid chain; its full sequence is Cytochrome c oxidase subunit 3 (261 aa).

Residues 1–15 (MAHQAHAYHMVDPSP) lie on the Mitochondrial matrix side of the membrane. The helical transmembrane segment at 16–34 (WPLTGAIAALLLTSGTAVW) threads the bilayer. At 35-40 (FHFHSL) the chain is on the mitochondrial intermembrane side. Residues 41-66 (TLLTLGNVLLLLTMYQWWRDIIREGT) form a helical membrane-spanning segment. Residues 67 to 72 (FQGHHT) are Mitochondrial matrix-facing. Residues 73–105 (PPVQKGLRYGMILFITSEVFFFLGFFWAFYHAS) traverse the membrane as a helical segment. The Mitochondrial intermembrane portion of the chain corresponds to 106–128 (LAPTPELGGCWPPTGITTLDPFE). The chain crosses the membrane as a helical span at residues 129–152 (VPLLNTAVLLASGVTVTWAHHSIM). At 153–155 (EGE) the chain is on the mitochondrial matrix side. The helical transmembrane segment at 156-183 (RKQTIQALTLTILLGFYFTFLQGMEYYE) threads the bilayer. Residues 184–190 (APFTIAD) are Mitochondrial intermembrane-facing. The helical transmembrane segment at 191-223 (GVYGSTFFVATGFHGLHVIIGSTFLAVCLLRQV) threads the bilayer. At 224 to 232 (QYHFTSEHH) the chain is on the mitochondrial matrix side. Residues 233 to 256 (FGFEAAAWYWHFVDVVWLFLYVSI) form a helical membrane-spanning segment. Residues 257–261 (YWWGS) lie on the Mitochondrial intermembrane side of the membrane.

It belongs to the cytochrome c oxidase subunit 3 family. In terms of assembly, component of the cytochrome c oxidase (complex IV, CIV), a multisubunit enzyme composed of 14 subunits. The complex is composed of a catalytic core of 3 subunits MT-CO1, MT-CO2 and MT-CO3, encoded in the mitochondrial DNA, and 11 supernumerary subunits COX4I, COX5A, COX5B, COX6A, COX6B, COX6C, COX7A, COX7B, COX7C, COX8 and NDUFA4, which are encoded in the nuclear genome. The complex exists as a monomer or a dimer and forms supercomplexes (SCs) in the inner mitochondrial membrane with NADH-ubiquinone oxidoreductase (complex I, CI) and ubiquinol-cytochrome c oxidoreductase (cytochrome b-c1 complex, complex III, CIII), resulting in different assemblies (supercomplex SCI(1)III(2)IV(1) and megacomplex MCI(2)III(2)IV(2)).

Its subcellular location is the mitochondrion inner membrane. It carries out the reaction 4 Fe(II)-[cytochrome c] + O2 + 8 H(+)(in) = 4 Fe(III)-[cytochrome c] + 2 H2O + 4 H(+)(out). Functionally, component of the cytochrome c oxidase, the last enzyme in the mitochondrial electron transport chain which drives oxidative phosphorylation. The respiratory chain contains 3 multisubunit complexes succinate dehydrogenase (complex II, CII), ubiquinol-cytochrome c oxidoreductase (cytochrome b-c1 complex, complex III, CIII) and cytochrome c oxidase (complex IV, CIV), that cooperate to transfer electrons derived from NADH and succinate to molecular oxygen, creating an electrochemical gradient over the inner membrane that drives transmembrane transport and the ATP synthase. Cytochrome c oxidase is the component of the respiratory chain that catalyzes the reduction of oxygen to water. Electrons originating from reduced cytochrome c in the intermembrane space (IMS) are transferred via the dinuclear copper A center (CU(A)) of subunit 2 and heme A of subunit 1 to the active site in subunit 1, a binuclear center (BNC) formed by heme A3 and copper B (CU(B)). The BNC reduces molecular oxygen to 2 water molecules using 4 electrons from cytochrome c in the IMS and 4 protons from the mitochondrial matrix. In Oncorhynchus masou (Cherry salmon), this protein is Cytochrome c oxidase subunit 3 (mt-co3).